A 780-amino-acid polypeptide reads, in one-letter code: ATP-dependent 6-phosphofructokinase, muscle type (780 aa).

T2 bears the N-acetylthreonine mark. Residues 2 to 390 (THEEHHAAKT…NWEVYKLLAH (389 aa)) form an N-terminal catalytic PFK domain 1 region. ATP is bound by residues G25, 88–89 (RC), and 118–121 (GDGS). D119 contacts Mg(2+). S133 carries the phosphoserine modification. Substrate-binding positions include 164-166 (SID), R201, 208-210 (MGR), E264, R292, and 298-301 (HVQR). The Proton acceptor role is filled by D166. S377 is modified (phosphoserine). The interdomain linker stretch occupies residues 391-401 (VRPPVSKGGLH). The C-terminal regulatory PFK domain 2 stretch occupies residues 402–780 (TVAVMNVGAP…SRKRSGEAAV (379 aa)). Beta-D-fructose 2,6-bisphosphate-binding positions include R471 and 528-532 (TVSNN). Residue S530 is glycosylated (O-linked (GlcNAc) serine). An N6-(2-hydroxyisobutyryl)lysine modification is found at K557. Beta-D-fructose 2,6-bisphosphate is bound by residues R566, 573–575 (MGG), E629, R655, and 661–664 (HMQQ). S667 carries the phosphoserine modification. Residue R735 participates in beta-D-fructose 2,6-bisphosphate binding. S775 is subject to Phosphoserine.

It belongs to the phosphofructokinase type A (PFKA) family. ATP-dependent PFK group I subfamily. Eukaryotic two domain clade 'E' sub-subfamily. As to quaternary structure, homo- and heterotetramers. Phosphofructokinase (PFK) enzyme functions as a tetramer composed of different combinations of 3 types of subunits, called PFKM (M), PFKL (L) and PFKP (P). The composition of the PFK tetramer differs according to the tissue type it is present in. The kinetic and regulatory properties of the tetrameric enzyme are dependent on the subunit composition, hence can vary across tissues. Isoform 2 and isoform 3 interact (via N-terminal testis-specific region) with GSTM5. Isoform 2 and isoform 3 interact (via C-terminus) with HK1 (via N-terminal spermatogenic cell-specific region). It depends on Mg(2+) as a cofactor. Post-translationally, glcNAcylation decreases enzyme activity. Isoform 1 is expressed in skeletal muscle (at protein level). Isoform 2 and isoform 3 are testis-specific and are detected in quiescent sperm (at protein level). They are first detected in the cytoplasm of round spermatids and subsequently in the flagellum of elongated spermatids extending into the seminiferous tubule lumen (at protein level). Isoform 2 is expressed at higher level than isoform 3 in testis.

It localises to the cytoplasm. The protein resides in the cell projection. It is found in the cilium. Its subcellular location is the flagellum. The catalysed reaction is beta-D-fructose 6-phosphate + ATP = beta-D-fructose 1,6-bisphosphate + ADP + H(+). It functions in the pathway carbohydrate degradation; glycolysis; D-glyceraldehyde 3-phosphate and glycerone phosphate from D-glucose: step 3/4. With respect to regulation, allosterically activated by ADP, AMP, or fructose 2,6-bisphosphate, and allosterically inhibited by ATP or citrate. In terms of biological role, catalyzes the phosphorylation of D-fructose 6-phosphate to fructose 1,6-bisphosphate by ATP, the first committing step of glycolysis. This is ATP-dependent 6-phosphofructokinase, muscle type (Pfkm) from Mus musculus (Mouse).